The following is a 596-amino-acid chain: Clathrin heavy chain linker domain-containing protein 1 (596 aa).

Positions 129-241 (QLEAKMRIIE…RDIAENLKKD (113 aa)) form a coiled coil.

The chain is Clathrin heavy chain linker domain-containing protein 1 (Clhc1) from Mus musculus (Mouse).